The sequence spans 370 residues: Coiled-coil domain-containing protein 89 (370 aa).

The disordered stretch occupies residues 1 to 38 (MPQEESAPRMDTPSSEEPLDKQNRKLEDQEEEMGFKEL). At T12 the chain carries Phosphothreonine. Residues 18–38 (PLDKQNRKLEDQEEEMGFKEL) are compositionally biased toward basic and acidic residues. Residues 19 to 346 (LDKQNRKLED…YDELRLQSEA (328 aa)) adopt a coiled-coil conformation.

The protein belongs to the CCDC89 family. As to quaternary structure, interacts with HEY1.

It localises to the cytoplasm. The protein resides in the nucleus. This chain is Coiled-coil domain-containing protein 89, found in Bos taurus (Bovine).